Consider the following 710-residue polypeptide: E3 ubiquitin-protein ligase TRIM9 (710 aa).

Residues 10–50 form an RING-type zinc finger; the sequence is CPVCGSFYREPIILPCSHNICQACARNILVQTPESESPQSR. The residue at position 41 (Thr41) is a Phosphothreonine. Ser44, Ser46, Ser49, and Ser53 each carry phosphoserine. 2 consecutive B box-type zinc fingers follow at residues 163–212 and 224–266; these read AAAL…LVPP and RKVS…VKAL. The Zn(2+) site is built by Cys168, Cys171, Cys193, His198, Cys229, His232, Cys252, and His258. A coiled-coil region spans residues 273–340; sequence HKSQLSQALN…KAQLLARVNK (68 aa). The 59-residue stretch at 374-432 folds into the COS domain; sequence IKENDPSGFLQISDALIRRVHLTEDQWGKGTLTPRMTTDFDLSLDNSPLLQSIHQLDFV. The Fibronectin type-III domain maps to 440–535; sequence VPATPILQLE…KTLVLQTSEV (96 aa). The 170-residue stretch at 533–702 folds into the B30.2/SPRY domain; that stretch reads SEVAWFAFDP…LHTGLQVPDF (170 aa).

This sequence belongs to the TRIM/RBCC family. As to quaternary structure, interacts with SNAP25. Post-translationally, auto-ubiquitinated.

It is found in the cytoplasm. It localises to the cell projection. The protein resides in the dendrite. Its subcellular location is the cytoplasmic vesicle. The protein localises to the secretory vesicle. It is found in the synaptic vesicle. It localises to the synapse. The protein resides in the cytoskeleton. The enzyme catalyses S-ubiquitinyl-[E2 ubiquitin-conjugating enzyme]-L-cysteine + [acceptor protein]-L-lysine = [E2 ubiquitin-conjugating enzyme]-L-cysteine + N(6)-ubiquitinyl-[acceptor protein]-L-lysine.. The protein operates within protein modification; protein ubiquitination. Functionally, E3 ubiquitin-protein ligase which ubiquitinates itself in cooperation with an E2 enzyme UBE2D2/UBC4 and serves as a targeting signal for proteasomal degradation. May play a role in regulation of neuronal functions. May act as a regulator of synaptic vesicle exocytosis by controlling the availability of SNAP25 for the SNARE complex formation. This chain is E3 ubiquitin-protein ligase TRIM9 (TRIM9), found in Bos taurus (Bovine).